We begin with the raw amino-acid sequence, 466 residues long: Phosphomethylpyrimidine synthase (466 aa).

Substrate-binding positions include N80, M109, Y139, H175, 195–197, 236–239, and E275; these read SRG and DSLR. H279 contacts Zn(2+). A substrate-binding site is contributed by Y302. Residue H343 participates in Zn(2+) binding. [4Fe-4S] cluster contacts are provided by C423, C426, and C431.

It belongs to the ThiC family. It depends on [4Fe-4S] cluster as a cofactor.

It carries out the reaction 5-amino-1-(5-phospho-beta-D-ribosyl)imidazole + S-adenosyl-L-methionine = 4-amino-2-methyl-5-(phosphooxymethyl)pyrimidine + CO + 5'-deoxyadenosine + formate + L-methionine + 3 H(+). Its pathway is cofactor biosynthesis; thiamine diphosphate biosynthesis. Its function is as follows. Catalyzes the synthesis of the hydroxymethylpyrimidine phosphate (HMP-P) moiety of thiamine from aminoimidazole ribotide (AIR) in a radical S-adenosyl-L-methionine (SAM)-dependent reaction. This Synechococcus sp. (strain RCC307) protein is Phosphomethylpyrimidine synthase.